The primary structure comprises 93 residues: Peptide YY-like (93 aa).

The first 27 residues, 1–27, serve as a signal peptide directing secretion; that stretch reads MVSPRVRLAALALSVCAILCLGMHASA. Tyr-63 carries the tyrosine amide modification. The propeptide at 65–93 is C-terminal extension; the sequence is KRALTPENWIYRDPAEERVTYGLDDYAMW.

It belongs to the NPY family. As to expression, gut and medial reticulospinal neuron system in the brainstem.

It localises to the secreted. Functionally, gastrointestinal hormone and neuropeptide. The polypeptide is Peptide YY-like (pyy) (Lampetra fluviatilis (European river lamprey)).